The following is a 439-amino-acid chain: tRNA-2-methylthio-N(6)-dimethylallyladenosine synthase (439 aa).

The 118-residue stretch at 2–119 folds into the MTTase N-terminal domain; that stretch reads KKLYLKTHGC…LPDLLDSVIQ (118 aa). [4Fe-4S] cluster contacts are provided by C11, C48, C82, C156, C160, and C163. The Radical SAM core domain maps to 142–374; sequence RAEGPSAFVS…QNRINVKAAE (233 aa). The TRAM domain occupies 377–439; the sequence is QSMVGTQQRI…RPYSLWGEIC (63 aa).

This sequence belongs to the methylthiotransferase family. MiaB subfamily. As to quaternary structure, monomer. The cofactor is [4Fe-4S] cluster.

Its subcellular location is the cytoplasm. It catalyses the reaction N(6)-dimethylallyladenosine(37) in tRNA + (sulfur carrier)-SH + AH2 + 2 S-adenosyl-L-methionine = 2-methylsulfanyl-N(6)-dimethylallyladenosine(37) in tRNA + (sulfur carrier)-H + 5'-deoxyadenosine + L-methionine + A + S-adenosyl-L-homocysteine + 2 H(+). In terms of biological role, catalyzes the methylthiolation of N6-(dimethylallyl)adenosine (i(6)A), leading to the formation of 2-methylthio-N6-(dimethylallyl)adenosine (ms(2)i(6)A) at position 37 in tRNAs that read codons beginning with uridine. This Coxiella burnetii (strain Dugway 5J108-111) protein is tRNA-2-methylthio-N(6)-dimethylallyladenosine synthase.